A 160-amino-acid chain; its full sequence is SsrA-binding protein (160 aa).

It belongs to the SmpB family.

Its subcellular location is the cytoplasm. Required for rescue of stalled ribosomes mediated by trans-translation. Binds to transfer-messenger RNA (tmRNA), required for stable association of tmRNA with ribosomes. tmRNA and SmpB together mimic tRNA shape, replacing the anticodon stem-loop with SmpB. tmRNA is encoded by the ssrA gene; the 2 termini fold to resemble tRNA(Ala) and it encodes a 'tag peptide', a short internal open reading frame. During trans-translation Ala-aminoacylated tmRNA acts like a tRNA, entering the A-site of stalled ribosomes, displacing the stalled mRNA. The ribosome then switches to translate the ORF on the tmRNA; the nascent peptide is terminated with the 'tag peptide' encoded by the tmRNA and targeted for degradation. The ribosome is freed to recommence translation, which seems to be the essential function of trans-translation. This Salmonella agona (strain SL483) protein is SsrA-binding protein.